Here is a 305-residue protein sequence, read N- to C-terminus: MAILVNKDTKVVVQGITGKEGSFHAKQCKEYGTQVVAGVTPGKGGMEVEGIPVFNTVKEAVKETGANCSLIFVPAPFAADAIVEALDAGIELVVCITEGIPVKDMMMVKDYMLKNYPNAKLVGPNCPGVITPGEAKVGIMPGHIFKRGKIGIVSRSGTLTYEAAYQLTKYGLGQSTAVGIGGDPVHGLTHRDVIEMFNKDPETEAILMIGEIGGTEEEEAAEYIEKEVDKPVFAYIAGITAPPGKRMGHAGAIIMGGKGTAKAKMEALEKAGAYVIENPAKIGETVAKILKVIELEEEERTSDAE.

Residues 17–20, Lys-43, and 96–98 contribute to the CoA site; these read TGKE and ITE. Tyr-161 contributes to the substrate binding site. His-249 (tele-phosphohistidine intermediate) is an active-site residue.

This sequence belongs to the succinate/malate CoA ligase alpha subunit family. Heterotetramer of two alpha and two beta subunits.

It catalyses the reaction succinate + ATP + CoA = succinyl-CoA + ADP + phosphate. The enzyme catalyses GTP + succinate + CoA = succinyl-CoA + GDP + phosphate. It functions in the pathway carbohydrate metabolism; tricarboxylic acid cycle; succinate from succinyl-CoA (ligase route): step 1/1. Succinyl-CoA synthetase functions in the citric acid cycle (TCA), coupling the hydrolysis of succinyl-CoA to the synthesis of either ATP or GTP and thus represents the only step of substrate-level phosphorylation in the TCA. The alpha subunit of the enzyme binds the substrates coenzyme A and phosphate, while succinate binding and nucleotide specificity is provided by the beta subunit. This is Succinate--CoA ligase [ADP-forming] subunit alpha from Aquifex aeolicus (strain VF5).